Here is a 92-residue protein sequence, read N- to C-terminus: Cell division protein FtsL (92 aa).

Over 1 to 3 (MGR) the chain is Cytoplasmic. The chain crosses the membrane as a helical span at residues 4–21 (ISLIVAALLMLSAISLVT). The Periplasmic portion of the chain corresponds to 22-92 (SRYQSRQLFI…YMNQPAGGAQ (71 aa)).

It belongs to the FtsL family. Part of a complex composed of FtsB, FtsL and FtsQ.

The protein resides in the cell inner membrane. In terms of biological role, essential cell division protein. May link together the upstream cell division proteins, which are predominantly cytoplasmic, with the downstream cell division proteins, which are predominantly periplasmic. The polypeptide is Cell division protein FtsL (Bordetella pertussis (strain Tohama I / ATCC BAA-589 / NCTC 13251)).